A 122-amino-acid chain; its full sequence is MIQPQTHLNVADNSGARELMCIRIIGASNRRYAHIGDVIVAVIKEAVPNMPLERSEVIRAVIVRTCKELKRDNGMIIRYDDNAAVVIDQEGNPKGTRVFGAIARELRQLSFTKIVSLAPEVL.

It belongs to the universal ribosomal protein uL14 family. Part of the 50S ribosomal subunit.

It localises to the plastid. It is found in the chloroplast. Binds to 23S rRNA. The protein is Large ribosomal subunit protein uL14c of Platanus occidentalis (Sycamore).